Consider the following 329-residue polypeptide: Ribosomal RNA small subunit methyltransferase H (329 aa).

S-adenosyl-L-methionine is bound by residues 46-48, Asp-65, Phe-92, Asp-113, and His-120; that span reads GGH. The segment at 295 to 329 is disordered; it reads RGAERPSPAEVAANPRAASARLRAAEKIRDTREAA. Over residues 317 to 329 the composition is skewed to basic and acidic residues; the sequence is RAAEKIRDTREAA.

Belongs to the methyltransferase superfamily. RsmH family.

Its subcellular location is the cytoplasm. It carries out the reaction cytidine(1402) in 16S rRNA + S-adenosyl-L-methionine = N(4)-methylcytidine(1402) in 16S rRNA + S-adenosyl-L-homocysteine + H(+). Its function is as follows. Specifically methylates the N4 position of cytidine in position 1402 (C1402) of 16S rRNA. The protein is Ribosomal RNA small subunit methyltransferase H of Acidothermus cellulolyticus (strain ATCC 43068 / DSM 8971 / 11B).